A 269-amino-acid polypeptide reads, in one-letter code: 4-hydroxy-tetrahydrodipicolinate reductase (269 aa).

NAD(+) is bound by residues 10–15 (GANGRM), glutamate 36, 99–101 (GTT), and 123–126 (AANF). Histidine 156 acts as the Proton donor/acceptor in catalysis. Position 157 (histidine 157) interacts with (S)-2,3,4,5-tetrahydrodipicolinate. The active-site Proton donor is lysine 160. 166–167 (GT) is a (S)-2,3,4,5-tetrahydrodipicolinate binding site.

The protein belongs to the DapB family.

It is found in the cytoplasm. The catalysed reaction is (S)-2,3,4,5-tetrahydrodipicolinate + NAD(+) + H2O = (2S,4S)-4-hydroxy-2,3,4,5-tetrahydrodipicolinate + NADH + H(+). It catalyses the reaction (S)-2,3,4,5-tetrahydrodipicolinate + NADP(+) + H2O = (2S,4S)-4-hydroxy-2,3,4,5-tetrahydrodipicolinate + NADPH + H(+). It participates in amino-acid biosynthesis; L-lysine biosynthesis via DAP pathway; (S)-tetrahydrodipicolinate from L-aspartate: step 4/4. Catalyzes the conversion of 4-hydroxy-tetrahydrodipicolinate (HTPA) to tetrahydrodipicolinate. In Neisseria meningitidis serogroup C (strain 053442), this protein is 4-hydroxy-tetrahydrodipicolinate reductase.